Here is a 688-residue protein sequence, read N- to C-terminus: Glycine--tRNA ligase beta subunit (688 aa).

This sequence belongs to the class-II aminoacyl-tRNA synthetase family. Tetramer of two alpha and two beta subunits.

It is found in the cytoplasm. The enzyme catalyses tRNA(Gly) + glycine + ATP = glycyl-tRNA(Gly) + AMP + diphosphate. The polypeptide is Glycine--tRNA ligase beta subunit (Histophilus somni (strain 2336) (Haemophilus somnus)).